Consider the following 432-residue polypeptide: Phosphomethylpyrimidine synthase (432 aa).

Substrate-binding positions include Asn69, Met98, Tyr127, His163, 185–187, 226–229, and Glu265; these read SRG and DACR. His269 lines the Zn(2+) pocket. A substrate-binding site is contributed by Tyr292. His333 contributes to the Zn(2+) binding site. 3 residues coordinate [4Fe-4S] cluster: Cys409, Cys412, and Cys416.

The protein belongs to the ThiC family. The cofactor is [4Fe-4S] cluster.

It catalyses the reaction 5-amino-1-(5-phospho-beta-D-ribosyl)imidazole + S-adenosyl-L-methionine = 4-amino-2-methyl-5-(phosphooxymethyl)pyrimidine + CO + 5'-deoxyadenosine + formate + L-methionine + 3 H(+). It functions in the pathway cofactor biosynthesis; thiamine diphosphate biosynthesis. Functionally, catalyzes the synthesis of the hydroxymethylpyrimidine phosphate (HMP-P) moiety of thiamine from aminoimidazole ribotide (AIR) in a radical S-adenosyl-L-methionine (SAM)-dependent reaction. The protein is Phosphomethylpyrimidine synthase of Pelotomaculum thermopropionicum (strain DSM 13744 / JCM 10971 / SI).